The chain runs to 538 residues: Atos homolog protein B (538 aa).

3 disordered regions span residues 1–99 (MRHV…PSTV), 165–185 (QGGQGCLGETPGPAPSGQLHT), and 199–270 (KSPV…GTLG). Over residues 227 to 238 (HTPPGPGPPGPC) the composition is skewed to pro residues. 2 positions are modified to phosphoserine: S254 and S255. The interval 348-430 (LLGNFEESLL…VPKVGTIQVT (83 aa)) is required for macropage invasion. The transactivation domain 1 (TAD1) stretch occupies residues 436-444 (QTVVKMFLV).

It belongs to the ATOS family.

It is found in the nucleus. In terms of biological role, transcription regulator that syncronizes transcriptional and translational programs to promote macrophage invasion of tissues. The sequence is that of Atos homolog protein B from Mus musculus (Mouse).